A 221-amino-acid chain; its full sequence is Redox-sensing transcriptional repressor Rex (221 aa).

Residues 17-56 constitute a DNA-binding region (H-T-H motif); the sequence is IYYYYLSSLHEAGIKRINSTEISEAIKFDAATVRRDFSYF. 91-96 provides a ligand contact to NAD(+); it reads GTGNLG.

It belongs to the transcriptional regulatory Rex family. Homodimer.

Its subcellular location is the cytoplasm. In terms of biological role, modulates transcription in response to changes in cellular NADH/NAD(+) redox state. In Oenococcus oeni (strain ATCC BAA-331 / PSU-1), this protein is Redox-sensing transcriptional repressor Rex.